The primary structure comprises 154 residues: 17 kDa surface antigen (154 aa).

The signal sequence occupies residues 1 to 19; it reads MKLLSKIMIIALAASMLQA. Cys20 is lipidated: N-palmitoyl cysteine. The S-diacylglycerol cysteine moiety is linked to residue Cys20.

This sequence belongs to the rickettsiale 17 kDa surface antigen family.

The protein localises to the cell outer membrane. The sequence is that of 17 kDa surface antigen (omp) from Rickettsia montanensis.